Consider the following 99-residue polypeptide: DNA-binding protein Fis (99 aa).

A DNA-binding region (H-T-H motif) is located at residues 75 to 94; the sequence is QTRAANMLGINRGTLRKKLK.

The protein belongs to the transcriptional regulatory Fis family. Homodimer.

Activates ribosomal RNA transcription. Plays a direct role in upstream activation of rRNA promoters. The protein is DNA-binding protein Fis of Haemophilus influenzae (strain PittEE).